The primary structure comprises 105 residues: Synaptic plasticity regulator PANTS (105 aa).

Belongs to the UPF0545 family. As to quaternary structure, interacts with RTN4 isoform A/Nogo-A; the interaction results in enhanced RTN4-mediated inhibition of AMPA receptor clustering. Also interacts with NCAM1, RANBP2 and CCT8. Rapidly degraded by proteolysis following neuronal stimulation, resulting in increased AMPA receptor clustering.

It localises to the synapse. It is found in the synaptic cleft. In terms of biological role, negatively regulates long-term potentiation and modulates adult synaptic plasticity. Stabilizes the interaction of RTN4 isoform A/Nogo-A with its receptors, inhibiting clustering of postsynaptic AMPA receptors at synaptic sites. Upon neuronal stimulation, degraded at synapses, reducing RTN4 signaling and allowing AMPA receptor clustering at individual synapses. This Homo sapiens (Human) protein is Synaptic plasticity regulator PANTS (C22orf39).